Consider the following 170-residue polypeptide: tRNA-splicing endonuclease (170 aa).

Catalysis depends on residues Y110, H116, and K147.

It belongs to the tRNA-intron endonuclease family. Archaeal short subfamily. In terms of assembly, homotetramer; although the tetramer contains four active sites, only two participate in the cleavage. Therefore, it should be considered as a dimer of dimers.

The enzyme catalyses pretRNA = a 3'-half-tRNA molecule with a 5'-OH end + a 5'-half-tRNA molecule with a 2',3'-cyclic phosphate end + an intron with a 2',3'-cyclic phosphate and a 5'-hydroxyl terminus.. Its function is as follows. Endonuclease that removes tRNA introns. Cleaves pre-tRNA at the 5'- and 3'-splice sites to release the intron. The products are an intron and two tRNA half-molecules bearing 2',3' cyclic phosphate and 5'-OH termini. Recognizes a pseudosymmetric substrate in which 2 bulged loops of 3 bases are separated by a stem of 4 bp. The polypeptide is tRNA-splicing endonuclease (Pyrococcus horikoshii (strain ATCC 700860 / DSM 12428 / JCM 9974 / NBRC 100139 / OT-3)).